The primary structure comprises 439 residues: Methionine aminopeptidase 2-1 (439 aa).

The disordered stretch occupies residues 1 to 87 (MSGGESRSPD…DKLFPSGNFP (87 aa)). A compositionally biased stretch (acidic residues) spans 22–32 (GGDDEESDGDG). Basic residues predominate over residues 47–61 (KKRKKRNKKKSKKKS). Histidine 190 provides a ligand contact to substrate. Positions 211, 222, and 291 each coordinate a divalent metal cation. Histidine 299 contributes to the substrate binding site. A divalent metal cation contacts are provided by glutamate 324 and glutamate 420.

The protein belongs to the peptidase M24A family. Methionine aminopeptidase eukaryotic type 2 subfamily. Co(2+) serves as cofactor. Requires Zn(2+) as cofactor. Mn(2+) is required as a cofactor. It depends on Fe(2+) as a cofactor.

Its subcellular location is the cytoplasm. The enzyme catalyses Release of N-terminal amino acids, preferentially methionine, from peptides and arylamides.. Functionally, cotranslationally removes the N-terminal methionine from nascent proteins. The N-terminal methionine is often cleaved when the second residue in the primary sequence is small and uncharged (Met-Ala-, Cys, Gly, Pro, Ser, Thr, or Val). The polypeptide is Methionine aminopeptidase 2-1 (Chaetomium globosum (strain ATCC 6205 / CBS 148.51 / DSM 1962 / NBRC 6347 / NRRL 1970) (Soil fungus)).